We begin with the raw amino-acid sequence, 706 residues long: Transmembrane and coiled-coil domains protein 2 (706 aa).

Disordered regions lie at residues 1 to 221 (MKRC…TTDT) and 251 to 280 (VALSLPSGPGHGDSDGPISLDVPDGAPDPQ). Position 6 is a phosphoserine (Ser-6). A compositionally biased stretch (basic residues) spans 83-94 (GLKHLFHSRRRS). The segment covering 102–112 (SQEAQQQQQQQ) has biased composition (low complexity). A compositionally biased stretch (basic and acidic residues) spans 120-131 (PDEKERSPEMHR). Arg-163 carries the post-translational modification Omega-N-methylarginine. Residues 330–365 (KQVFEKKNQKSAQTIAQLHKKLEHYRRRLKEIEQNG) are a coiled coil. Ser-435 is modified (phosphoserine). The interval 440–459 (AHLKDPMEDGPPEEAARALS) is disordered. Phosphoserine occurs at positions 461 and 467. Positions 464–510 (LVSSPKYGSDDECSSASASSAGAGSNSGAGPGGALGSPRSNTLYGAP) are disordered. Low complexity predominate over residues 477–487 (SSASASSAGAG). The segment covering 488–498 (SNSGAGPGGAL) has biased composition (gly residues). Position 500 is a phosphoserine (Ser-500). A coiled-coil region spans residues 511 to 630 (GNLDTLLEEL…QQQQVVQLEG (120 aa)). Transmembrane regions (helical) follow at residues 646 to 666 (VILALMAVLLVFVSTIANFIT) and 679 to 699 (ALLLLVLFLLWKHWASLTYLL).

Belongs to the TEX28 family. May form homodimers and heterodimers with TMCC2 or TMCC3 via the coiled-coil domains. Interacts with ribosomal proteins RPL4 and RPS6. Interacts with APOE and proteolytic processed C-terminal fragment C99 of the amyloid precursor protein (APP C99).

It localises to the endoplasmic reticulum membrane. May be involved in the regulation of the proteolytic processing of the amyloid precursor protein (APP) possibly also implicating APOE. The chain is Transmembrane and coiled-coil domains protein 2 from Mus musculus (Mouse).